The sequence spans 707 residues: Polyribonucleotide nucleotidyltransferase (707 aa).

D488 and D494 together coordinate Mg(2+). The 61-residue stretch at 555-615 (PIIKVTKIDP…ENVDNAIALI (61 aa)) folds into the KH domain. The 68-residue stretch at 625-692 (GEILEGKITR…DLGRLQFKRV (68 aa)) folds into the S1 motif domain.

Belongs to the polyribonucleotide nucleotidyltransferase family. Requires Mg(2+) as cofactor.

It localises to the cytoplasm. It catalyses the reaction RNA(n+1) + phosphate = RNA(n) + a ribonucleoside 5'-diphosphate. Involved in mRNA degradation. Catalyzes the phosphorolysis of single-stranded polyribonucleotides processively in the 3'- to 5'-direction. The polypeptide is Polyribonucleotide nucleotidyltransferase (Thermotoga neapolitana (strain ATCC 49049 / DSM 4359 / NBRC 107923 / NS-E)).